The sequence spans 191 residues: Phospholipase A2-delta (191 aa).

Positions 1 to 25 (MIRGGALTHVALGLTVFLLLAVVHS) are cleaved as a signal peptide. Disulfide bonds link Cys29/Cys56, Cys33/Cys62, Cys38/Cys115, Cys49/Cys69, Cys68/Cys93, and Cys75/Cys86. Ca(2+) is bound by residues Tyr48, Gly50, and Tyr53. Residue His72 is part of the active site. Asp73 contributes to the Ca(2+) binding site. The disordered stretch occupies residues 161 to 191 (KADTKDGLGTNQGPQTKDGSKVSVPMNPSPS).

Belongs to the phospholipase A2 family. Requires Ca(2+) as cofactor. Specifically expressed in flowers but at a low level. Detected specifically in the pollen.

It is found in the secreted. The protein localises to the endoplasmic reticulum. The catalysed reaction is a 1,2-diacyl-sn-glycero-3-phosphocholine + H2O = a 1-acyl-sn-glycero-3-phosphocholine + a fatty acid + H(+). Functionally, PA2 catalyzes the calcium-dependent hydrolysis of the 2-acyl groups in 3-sn-phosphoglycerides. Releases lysophospholipids (LPLs) and free fatty acids (FFAs) from membrane phospholipids in response to hormones and other external stimuli. Plays a role in pollen development and germination and tube growth. In Arabidopsis thaliana (Mouse-ear cress), this protein is Phospholipase A2-delta (PLA2-DELTA).